Reading from the N-terminus, the 576-residue chain is Arginine--tRNA ligase (576 aa).

Residues 123–133 (PNIGKEMHVGH) carry the 'HIGH' region motif.

Belongs to the class-I aminoacyl-tRNA synthetase family. Monomer.

It is found in the cytoplasm. It catalyses the reaction tRNA(Arg) + L-arginine + ATP = L-arginyl-tRNA(Arg) + AMP + diphosphate. In Wigglesworthia glossinidia brevipalpis, this protein is Arginine--tRNA ligase.